A 227-amino-acid polypeptide reads, in one-letter code: Cytidylate kinase (227 aa).

An ATP-binding site is contributed by 12–20 (GPSGAGKGT).

This sequence belongs to the cytidylate kinase family. Type 1 subfamily.

It localises to the cytoplasm. It catalyses the reaction CMP + ATP = CDP + ADP. The enzyme catalyses dCMP + ATP = dCDP + ADP. The protein is Cytidylate kinase of Shigella sonnei (strain Ss046).